A 163-amino-acid chain; its full sequence is Extracellular giant hemoglobin major globin subunit B2 (163 aa).

The signal sequence occupies residues 1–16 (MIALFVLMGLMAAASA). The Globin domain occupies 19–163 (CCSSEDRANV…RIANGISAGL (145 aa)). A disulfide bridge links Cys20 with Cys151. Cys83 provides a ligand contact to hydrogen sulfide. A heme b-binding site is contributed by His114.

This sequence belongs to the globin family. The 400 kDa hemoglobin consists of a spherical 24-mer arranged as a double layer of dome-shaped dodecamers. Each dodecamer is composed of the 3-fold trimer of the tetramer A1-A2-B1-B2 having one intra-tetramer (A1-B2) disulfide bond and one inter-tetramer (B1-B2) disulfide bond per tetramer.

It localises to the secreted. In terms of biological role, the extracellular giant hemoglobin is able to bind and transport oxygen and hydrosulfide simultaneously and reversibly at two different sites. The chain is Extracellular giant hemoglobin major globin subunit B2 (ghbB2) from Oligobrachia mashikoi (Beard worm).